Consider the following 117-residue polypeptide: Large ribosomal subunit protein bL20c (117 aa).

It belongs to the bacterial ribosomal protein bL20 family.

It localises to the plastid. The protein resides in the chloroplast. Its function is as follows. Binds directly to 23S ribosomal RNA and is necessary for the in vitro assembly process of the 50S ribosomal subunit. It is not involved in the protein synthesizing functions of that subunit. This Morus indica (Mulberry) protein is Large ribosomal subunit protein bL20c.